A 120-amino-acid polypeptide reads, in one-letter code: Large ribosomal subunit protein uL18 (120 aa).

This sequence belongs to the universal ribosomal protein uL18 family. In terms of assembly, part of the 50S ribosomal subunit; part of the 5S rRNA/L5/L18/L25 subcomplex. Contacts the 5S and 23S rRNAs.

In terms of biological role, this is one of the proteins that bind and probably mediate the attachment of the 5S RNA into the large ribosomal subunit, where it forms part of the central protuberance. The sequence is that of Large ribosomal subunit protein uL18 from Synechococcus elongatus (strain ATCC 33912 / PCC 7942 / FACHB-805) (Anacystis nidulans R2).